The sequence spans 232 residues: Orotidine 5'-phosphate decarboxylase (232 aa).

Substrate-binding positions include aspartate 11, lysine 33, aspartate 60–threonine 69, threonine 119, arginine 180, glutamine 189, glycine 209, and arginine 210. Lysine 62 functions as the Proton donor in the catalytic mechanism.

It belongs to the OMP decarboxylase family. Type 1 subfamily. Homodimer.

It catalyses the reaction orotidine 5'-phosphate + H(+) = UMP + CO2. The protein operates within pyrimidine metabolism; UMP biosynthesis via de novo pathway; UMP from orotate: step 2/2. Its function is as follows. Catalyzes the decarboxylation of orotidine 5'-monophosphate (OMP) to uridine 5'-monophosphate (UMP). The sequence is that of Orotidine 5'-phosphate decarboxylase from Nitrosococcus oceani (strain ATCC 19707 / BCRC 17464 / JCM 30415 / NCIMB 11848 / C-107).